Reading from the N-terminus, the 730-residue chain is uncharacterized protein (730 aa).

A compositionally biased stretch (basic and acidic residues) spans 615 to 625; sequence FDKENSFDPSD. Disordered regions lie at residues 615–667 and 684–730; these read FDKE…SSFS and KSGS…FGKI. Composition is skewed to low complexity over residues 653 to 667 and 684 to 701; these read SSSS…SSFS and KSGS…NSSS. Residues 713–723 show a composition bias toward basic residues; it reads KKKKKKKKKKS.

This is an uncharacterized protein from Saccharomyces cerevisiae (strain ATCC 204508 / S288c) (Baker's yeast).